Consider the following 132-residue polypeptide: Large ribosomal subunit protein uL14 (132 aa).

The protein belongs to the universal ribosomal protein uL14 family. As to quaternary structure, part of the 50S ribosomal subunit. Forms a cluster with proteins L3 and L24e, part of which may contact the 16S rRNA in 2 intersubunit bridges.

Functionally, binds to 23S rRNA. Forms part of two intersubunit bridges in the 70S ribosome. This chain is Large ribosomal subunit protein uL14, found in Methanosarcina acetivorans (strain ATCC 35395 / DSM 2834 / JCM 12185 / C2A).